Here is a 570-residue protein sequence, read N- to C-terminus: MDVEKIALKHALINAIEHGGKANLKAVIGKVLGENPELRPRAKEIIPIINKVVEEVNSLARDEQLEKLKDIYPEYFEKKEEKKEKKGLPLLPKAEKGKVVTRFAPNPDGAFHLGNARAAILSYEYAKMYGGKFILRFDDTDPKVKRPEPIFYKMIIEDLEWLGIKPDEIVYASDRLEIYYKYAEELIKMGKAYVCTCPPEKFRELRDKGIPCPHRDEPVEVQLERWKKMLNGEYKEGEAVVRIKTDLNHPNPAVRDWPALRIIDNPNHPRTGNKYRVWPLYNFASAIDDHELGVTHIFRGQEHAENETRQRYIYEYFGWEYPVTIHHGRLSIEGVVLSKSKTRKGIEEGKYLGWDDPRLGTIRALRRRGILPEAIKELIIEVGLKKSDATISWENLAAINRKLVDPIANRYFFVADPIPMEVEGAPEFIAEIPLHPDHPERGVRRLKFTPERPVYVSKDDLNLLKPGNFVRLKDLFNVEILEVGDKIRARFYSFEYEIAKKNRWKMVHWVTEGRPCEVIIPEGDELVVRKGLLEKDAKVQVNEIVQFERFGFVRIDRIEGDKVIAIYAHK.

A 'HIGH' region motif is present at residues 105–115; the sequence is PNPDGAFHLGN.

Belongs to the class-I aminoacyl-tRNA synthetase family. Glutamate--tRNA ligase type 2 subfamily.

It is found in the cytoplasm. The enzyme catalyses tRNA(Glu) + L-glutamate + ATP = L-glutamyl-tRNA(Glu) + AMP + diphosphate. Its function is as follows. Catalyzes the attachment of glutamate to tRNA(Glu) in a two-step reaction: glutamate is first activated by ATP to form Glu-AMP and then transferred to the acceptor end of tRNA(Glu). In Pyrococcus horikoshii (strain ATCC 700860 / DSM 12428 / JCM 9974 / NBRC 100139 / OT-3), this protein is Glutamate--tRNA ligase.